The primary structure comprises 37 residues: Photosystem I reaction center subunit VIII (37 aa).

Residues 10 to 30 (IFVPLVGLVFPAIAMASLSLY) form a helical membrane-spanning segment.

This sequence belongs to the PsaI family.

The protein resides in the plastid. Its subcellular location is the chloroplast thylakoid membrane. Its function is as follows. May help in the organization of the PsaL subunit. This Gossypium hirsutum (Upland cotton) protein is Photosystem I reaction center subunit VIII.